Consider the following 270-residue polypeptide: Putative pyruvate, phosphate dikinase regulatory protein (270 aa).

148-155 (GISRTSKT) is an ADP binding site.

Belongs to the pyruvate, phosphate/water dikinase regulatory protein family. PDRP subfamily.

The catalysed reaction is N(tele)-phospho-L-histidyl/L-threonyl-[pyruvate, phosphate dikinase] + ADP = N(tele)-phospho-L-histidyl/O-phospho-L-threonyl-[pyruvate, phosphate dikinase] + AMP + H(+). It carries out the reaction N(tele)-phospho-L-histidyl/O-phospho-L-threonyl-[pyruvate, phosphate dikinase] + phosphate + H(+) = N(tele)-phospho-L-histidyl/L-threonyl-[pyruvate, phosphate dikinase] + diphosphate. Functionally, bifunctional serine/threonine kinase and phosphorylase involved in the regulation of the pyruvate, phosphate dikinase (PPDK) by catalyzing its phosphorylation/dephosphorylation. In Bacillus mycoides (strain KBAB4) (Bacillus weihenstephanensis), this protein is Putative pyruvate, phosphate dikinase regulatory protein.